We begin with the raw amino-acid sequence, 353 residues long: Nuclear hormone receptor family member nhr-27 (353 aa).

Residues 24–102 (VSNCVVCGRL…KGMLDLSRYT (79 aa)) constitute a DNA-binding region (nuclear receptor). 2 consecutive NR C4-type zinc fingers follow at residues 27 to 47 (CVVC…CSAC) and 64 to 85 (CKYS…CKFC). The NR LBD domain maps to 119–351 (ETLFLTMTVS…SQVHQDVIEF (233 aa)). The AF-2 stretch occupies residues 340–351 (QPSQVHQDVIEF).

The protein belongs to the nuclear hormone receptor family.

Its subcellular location is the nucleus. Functionally, ligand-activated transcription factor. Involved in lifespan extension in a manner dependent upon mitochondrial function. The chain is Nuclear hormone receptor family member nhr-27 from Caenorhabditis elegans.